A 221-amino-acid chain; its full sequence is uncharacterized protein (221 aa).

An N-terminal signal peptide occupies residues 1-23 (MNKLIQLALFFTLMLTGCSNSST). The tract at residues 67–221 (ELGKRKAKEE…QGYIDPEDAP (155 aa)) is disordered. Basic and acidic residues predominate over residues 68–150 (LGKRKAKEEA…EQKANAEKKR (83 aa)). Residues 70–161 (KRKAKEEAEK…SQAQRQQTEA (92 aa)) adopt a coiled-coil conformation. Residues 152–161 (SQAQRQQTEA) are compositionally biased toward polar residues. Residues 162 to 174 (PSSNSQDPPSSSS) are compositionally biased toward low complexity. Residues 175–184 (QTDKTIQQPA) show a composition bias toward polar residues. Over residues 195 to 205 (YEERKKWHDDQ) the composition is skewed to basic and acidic residues.

This is an uncharacterized protein from Bacillus subtilis (strain 168).